A 762-amino-acid chain; its full sequence is 5-methyltetrahydropteroyltriglutamate--homocysteine methyltransferase (762 aa).

5-methyltetrahydropteroyltri-L-glutamate-binding positions include 17-20 and lysine 111; that span reads REWK. Residues 435-437 and glutamate 488 contribute to the L-homocysteine site; that span reads IGS. Residues 435-437 and glutamate 488 contribute to the L-methionine site; that span reads IGS. Residues 519-520 and tryptophan 565 each bind 5-methyltetrahydropteroyltri-L-glutamate; that span reads RC. Residue aspartate 603 coordinates L-homocysteine. Aspartate 603 contacts L-methionine. Glutamate 609 serves as a coordination point for 5-methyltetrahydropteroyltri-L-glutamate. Zn(2+) is bound by residues histidine 645, cysteine 647, and glutamate 669. Catalysis depends on histidine 698, which acts as the Proton donor. Position 730 (cysteine 730) interacts with Zn(2+).

The protein belongs to the vitamin-B12 independent methionine synthase family. Zn(2+) serves as cofactor.

The enzyme catalyses 5-methyltetrahydropteroyltri-L-glutamate + L-homocysteine = tetrahydropteroyltri-L-glutamate + L-methionine. It participates in amino-acid biosynthesis; L-methionine biosynthesis via de novo pathway; L-methionine from L-homocysteine (MetE route): step 1/1. Functionally, catalyzes the transfer of a methyl group from 5-methyltetrahydrofolate to homocysteine resulting in methionine formation. In Bacillus cereus (strain AH187), this protein is 5-methyltetrahydropteroyltriglutamate--homocysteine methyltransferase.